The chain runs to 117 residues: V-type proton ATPase subunit G (117 aa).

This sequence belongs to the V-ATPase G subunit family. V-ATPase is a heteromultimeric enzyme made up of two complexes: the ATP-hydrolytic V1 complex and the proton translocation V0 complex. The V1 complex consists of three catalytic AB heterodimers that form a heterohexamer, three peripheral stalks each consisting of EG heterodimers, one central rotor including subunits D and F, and the regulatory subunits C and H. The proton translocation complex V0 consists of the proton transport subunit a, a ring of proteolipid subunits c9c'', rotary subunit d, subunits e and f, and the accessory subunits VhaAC45 and ATP6AP2.

Subunit of the V1 complex of vacuolar(H+)-ATPase (V-ATPase), a multisubunit enzyme composed of a peripheral complex (V1) that hydrolyzes ATP and a membrane integral complex (V0) that translocates protons. V-ATPase is responsible for acidifying and maintaining the pH of intracellular compartments and in some cell types, is targeted to the plasma membrane, where it is responsible for acidifying the extracellular environment. In enterocytes, acts as part of a pHCl-2 sensory pathway which mediates Tor-dependent larval growth and metabolism in response to zinc availability. Likely acts in maintaining enterocyte lysosomal acidification which consequently promotes Tor activation at the lysosome membrane. This is V-type proton ATPase subunit G (Vha13) from Drosophila melanogaster (Fruit fly).